A 789-amino-acid polypeptide reads, in one-letter code: Probable Xaa-Pro aminopeptidase SNOG_02267 (789 aa).

Residues D240, D251, E375, and E416 each coordinate Mn(2+). Disordered stretches follow at residues 607–658 and 670–704; these read SMSK…TGLA and NHVS…DDAL. Over residues 622-637 the composition is skewed to polar residues; sequence VISQKQIRNRRSVSST. Basic and acidic residues predominate over residues 638–650; it reads ARHDLRGDRERPQ.

Belongs to the peptidase M24B family. Mn(2+) serves as cofactor.

It catalyses the reaction Release of any N-terminal amino acid, including proline, that is linked to proline, even from a dipeptide or tripeptide.. Functionally, catalyzes the removal of a penultimate prolyl residue from the N-termini of peptides. The chain is Probable Xaa-Pro aminopeptidase SNOG_02267 from Phaeosphaeria nodorum (strain SN15 / ATCC MYA-4574 / FGSC 10173) (Glume blotch fungus).